Here is a 753-residue protein sequence, read N- to C-terminus: Synaptotagmin-like protein 5 (753 aa).

Positions 7–123 (FINLSFLLDH…IISGEWFLEE (117 aa)) constitute a RabBD domain. The FYVE-type zinc-finger motif lies at 64–106 (CVHCQKSLGLIFDRGAPCQACSLRVCSECRVTGLDGSWKCTVC). Disordered regions lie at residues 145 to 188 (RRSP…GFLL), 221 to 283 (SFKS…GFEN), and 298 to 359 (TKSH…LNSL). Ser-147 bears the Phosphoserine mark. Residues 224 to 238 (SVSGSDRGSTTSSDL) are compositionally biased toward low complexity. Composition is skewed to polar residues over residues 260–275 (TQRS…TSIS) and 305–316 (TSGTPSIAVSGT). C2 domains are found at residues 429 to 550 (VTGE…DEWF) and 590 to 717 (PQGK…VDWM).

As to quaternary structure, binds RAB27A that has been activated by GTP-binding.

Its subcellular location is the membrane. In terms of biological role, may act as Rab effector protein and play a role in vesicle trafficking. Binds phospholipids. This is Synaptotagmin-like protein 5 (Sytl5) from Rattus norvegicus (Rat).